Consider the following 103-residue polypeptide: PTS system oligo-beta-mannoside-specific EIIB component (103 aa).

In terms of domain architecture, PTS EIIB type-3 spans 1 to 103; it reads MKKILLACSS…EQALSLMVNQ (103 aa). The active-site Phosphocysteine intermediate is C8. C8 carries the phosphocysteine; by EIIA modification.

The protein localises to the cytoplasm. The catalysed reaction is D-cellobiose(out) + N(pros)-phospho-L-histidyl-[protein] = 6-phospho-beta-D-glucosyl-(1-&gt;4)-D-glucose(in) + L-histidyl-[protein]. In terms of biological role, the phosphoenolpyruvate-dependent sugar phosphotransferase system (sugar PTS), a major carbohydrate active transport system, catalyzes the phosphorylation of incoming sugar substrates concomitantly with their translocation across the cell membrane. The enzyme II GmuABC PTS system is involved in the transport of oligo-glucomannans such as cellobiose or mannobiose. The sequence is that of PTS system oligo-beta-mannoside-specific EIIB component from Bacillus subtilis (strain 168).